The following is a 163-amino-acid chain: Large ribosomal subunit protein mL59 (163 aa).

Residues 33 to 53 (PAGADPETHKTPYQEESPNPF) are disordered.

The protein belongs to the mitochondrion-specific ribosomal protein mL59 family. In terms of assembly, component of the mitochondrial large ribosomal subunit (mt-LSU). Mature N.crassa 74S mitochondrial ribosomes consist of a small (37S) and a large (54S) subunit. The 37S small subunit contains a 16S ribosomal RNA (16S mt-rRNA) and 32 different proteins. The 54S large subunit contains a 23S rRNA (23S mt-rRNA) and 42 different proteins.

It localises to the mitochondrion. Its function is as follows. Component of the mitochondrial ribosome (mitoribosome), a dedicated translation machinery responsible for the synthesis of mitochondrial genome-encoded proteins, including at least some of the essential transmembrane subunits of the mitochondrial respiratory chain. The mitoribosomes are attached to the mitochondrial inner membrane and translation products are cotranslationally integrated into the membrane. This Neurospora crassa (strain ATCC 24698 / 74-OR23-1A / CBS 708.71 / DSM 1257 / FGSC 987) protein is Large ribosomal subunit protein mL59 (mrpl25).